We begin with the raw amino-acid sequence, 481 residues long: O-acetyltransferase andG (481 aa).

Belongs to the fumigaclavine B O-acetyltransferase family. In terms of assembly, monomer.

The protein operates within secondary metabolite biosynthesis; terpenoid biosynthesis. In terms of biological role, O-acetyltransferase; part of the gene cluster that mediates the biosynthesis of anditomin, a fungal meroterpenoid. The first step of the pathway is the synthesis of 3,5-dimethylorsellinic acid (DMOA) by the polyketide synthase andM. DMOA is then converted to the phthalide compound 5,7-dihydroxy-4,6-dimethylphthalide (DHDMP) by the cytochrome P450 monooxygenase andK, which is further prenylated by the prenyltransferase andD to yield farnesyl-DHDMP. Further epoxidation by the FAD-dependent monooxygenase andE leads to epoxyfarnesyl-DHDMP. The next step involves the terpene cyclase andB that converts epoxyfarnesyl-DHDMP into preandiloid A through opening of the epoxide ring followed by the cyclization of the farnesyl moiety. Preandiloid A is in turn oxidized at the C-3 hydroxyl group to yield preandiloid B by the dehydrogenase andC. The dioxygenase andA is solely responsible for the dehydrogenation of preandiloid B leading to the enone preandiloid C, as well as for the intriguing structural rearrangement to generate the bicyclo[2.2.2]octane core, transforming preandiloid C into andiconin. FAD-binding monooxygenase andJ then produces andilesin D which is reduced by dehydrogenase andI to yield andilesin A. Action of acetyltransferase andG followed by a spontaneous acetate elimination leads then to andilesin B, which is in turn substrate of the short chain dehydrogenase andH to yield andilesin C. Finally, the dioxygenase andF catalyzes the transformation of andilesin C to anditomin. This chain is O-acetyltransferase andG, found in Emericella variicolor (Aspergillus stellatus).